Here is a 139-residue protein sequence, read N- to C-terminus: MAVCVAVIAKENYPLYIRSTPTENQLKFHYTVHTSLDVVDEKISAMGKAVMDQRELYLGLLYPTEDYKVYGYVTNSKVKFVMVVDSSNTSLRDNEIRSMFRKLHNSYTDVMCNPFYNPGDPIQSRAFDNTVTSMMVPAC.

Belongs to the TRAPP small subunits family. Sedlin subfamily.

Its subcellular location is the cytoplasm. The protein localises to the perinuclear region. It is found in the endoplasmic reticulum. The protein resides in the golgi apparatus. Functionally, may play a role in vesicular transport from endoplasmic reticulum to Golgi. In Xenopus tropicalis (Western clawed frog), this protein is Trafficking protein particle complex subunit 2-like protein (trappc2l).